Reading from the N-terminus, the 348-residue chain is Hereditary hemochromatosis protein (348 aa).

The N-terminal stretch at Met1–Gly22 is a signal peptide. The segment at Arg23–Glu114 is alpha-1. Topologically, residues Arg23–Val306 are extracellular. Residues Asn110, Asn130, and Asn234 are each glycosylated (N-linked (GlcNAc...) asparagine). An alpha-2 region spans residues Ser115–Gln205. 2 disulfides stabilise this stretch: Cys124-Cys187 and Cys225-Cys282. The alpha-3 stretch occupies residues Val206–Trp297. The region spanning Pro207–Glu298 is the Ig-like C1-type domain. The segment at Glu298–Val306 is connecting peptide. Residues Ile307–Arg330 form a helical membrane-spanning segment. Over Lys331–Glu348 the chain is Cytoplasmic.

The protein belongs to the MHC class I family. As to quaternary structure, binds TFR through the extracellular domain in a pH-dependent manner. In terms of tissue distribution, expressed in all tissues tested except brain.

Its subcellular location is the cell membrane. Binds to transferrin receptor (TFR) and reduces its affinity for iron-loaded transferrin. The protein is Hereditary hemochromatosis protein (HFE) of Homo sapiens (Human).